Reading from the N-terminus, the 67-residue chain is Small ribosomal subunit protein eS17 (67 aa).

Belongs to the eukaryotic ribosomal protein eS17 family. Part of the 30S ribosomal subunit.

The polypeptide is Small ribosomal subunit protein eS17 (Thermococcus kodakarensis (strain ATCC BAA-918 / JCM 12380 / KOD1) (Pyrococcus kodakaraensis (strain KOD1))).